A 193-amino-acid chain; its full sequence is dCTP deaminase (193 aa).

DCTP-binding positions include 110-115 (RSSLAR), Asp-128, 136-138 (VLE), Tyr-171, Lys-178, and Gln-182. Glu-138 functions as the Proton donor/acceptor in the catalytic mechanism.

It belongs to the dCTP deaminase family. In terms of assembly, homotrimer.

The catalysed reaction is dCTP + H2O + H(+) = dUTP + NH4(+). The protein operates within pyrimidine metabolism; dUMP biosynthesis; dUMP from dCTP (dUTP route): step 1/2. Its function is as follows. Catalyzes the deamination of dCTP to dUTP. This chain is dCTP deaminase, found in Aeromonas hydrophila subsp. hydrophila (strain ATCC 7966 / DSM 30187 / BCRC 13018 / CCUG 14551 / JCM 1027 / KCTC 2358 / NCIMB 9240 / NCTC 8049).